A 351-amino-acid chain; its full sequence is Rhodopsin (351 aa).

At M1–A36 the chain is on the extracellular side. 2 N-linked (GlcNAc...) asparagine glycosylation sites follow: N2 and N15. The chain crosses the membrane as a helical span at residues F37–V61. The Cytoplasmic segment spans residues T62 to N73. Residues Y74 to Y96 traverse the membrane as a helical segment. Over S97–C110 the chain is Extracellular. Residues C110 and C187 are joined by a disulfide bond. The helical transmembrane segment at N111–I133 threads the bilayer. The short motif at E134–W136 is the 'Ionic lock' involved in activated form stabilization element. At E134 to H152 the chain is on the cytoplasmic side. The helical transmembrane segment at A153–V173 threads the bilayer. Topologically, residues G174–S202 are extracellular. N200 carries N-linked (GlcNAc...) asparagine glycosylation. A helical membrane pass occupies residues F203–G224. At R225–R252 the chain is on the cytoplasmic side. A helical transmembrane segment spans residues M253–F274. Residues I275 to L286 lie on the Extracellular side of the membrane. Residues F287–C308 traverse the membrane as a helical segment. K296 carries the post-translational modification N6-(retinylidene)lysine. The Cytoplasmic segment spans residues M309 to A351. The S-palmitoyl cysteine moiety is linked to residue C323. The interval G330–A351 is disordered. Residues A335–A351 are compositionally biased toward low complexity.

Belongs to the G-protein coupled receptor 1 family. Opsin subfamily. In terms of processing, phosphorylated on some or all of the serine and threonine residues present in the C-terminal region. Contains one covalently linked retinal chromophore.

It localises to the membrane. The protein localises to the cell projection. The protein resides in the cilium. It is found in the photoreceptor outer segment. In terms of biological role, photoreceptor required for image-forming vision at low light intensity. While most salt water fish species use retinal as chromophore, most freshwater fish use 3-dehydroretinal, or a mixture of retinal and 3-dehydroretinal. Light-induced isomerization of 11-cis to all-trans retinal triggers a conformational change that activates signaling via G-proteins. Subsequent receptor phosphorylation mediates displacement of the bound G-protein alpha subunit by arrestin and terminates signaling. The polypeptide is Rhodopsin (rho) (Neoniphon sammara (Spotfin squirrelfish)).